A 315-amino-acid chain; its full sequence is Ribosomal large subunit pseudouridine synthase D (315 aa).

The region spanning 18–87 (KRLDQILSKL…LPQNIALNTI (70 aa)) is the S4 RNA-binding domain. Asp139 is a catalytic residue.

This sequence belongs to the pseudouridine synthase RluA family.

The protein localises to the cytoplasm. The enzyme catalyses uridine(1911/1915/1917) in 23S rRNA = pseudouridine(1911/1915/1917) in 23S rRNA. In terms of biological role, responsible for synthesis of pseudouridine from uracil at positions 1911, 1915 and 1917 in 23S ribosomal RNA. The polypeptide is Ribosomal large subunit pseudouridine synthase D (rluD) (Buchnera aphidicola subsp. Schizaphis graminum (strain Sg)).